The primary structure comprises 628 residues: Exonuclease V, mitochondrial (628 aa).

The transit peptide at 1-21 (MSRFWHFKKFYFTSCYSMQRM) directs the protein to the mitochondrion. The interval 37 to 58 (TSEHEQVQSISKEESRSLSSND) is disordered. Residues 38–52 (SEHEQVQSISKEESR) show a composition bias toward basic and acidic residues. Residues Cys-164, Cys-586, Cys-589, and Cys-595 each coordinate [4Fe-4S] cluster.

It belongs to the EXO5 family. As to quaternary structure, monomer. It depends on Mg(2+) as a cofactor. [4Fe-4S] cluster is required as a cofactor.

The protein resides in the mitochondrion. Single strand DNA specific 5' exonuclease involved in mitochondrial DNA replication and recombination. Releases dinucleotides as main products of catalysis. Has the capacity to slide across 5'double-stranded DNA or 5'RNA sequences and resumes cutting two nucleotides downstream of the double-stranded-to-single-stranded junction or RNA-to-DNA junction, respectively. This is Exonuclease V, mitochondrial (DEM1) from Candida albicans (strain SC5314 / ATCC MYA-2876) (Yeast).